Here is a 249-residue protein sequence, read N- to C-terminus: LexA repressor (249 aa).

The tract at residues 1 to 26 (MAAQATGGRATQRSQQSPAKPKGLTV) is disordered. Residues 9 to 18 (RATQRSQQSP) are compositionally biased toward polar residues. A DNA-binding region (H-T-H motif) is located at residues 48 to 68 (MREIGDTVGLASLSSVTHQLS). Active-site for autocatalytic cleavage activity residues include Ser-173 and Lys-210.

It belongs to the peptidase S24 family. As to quaternary structure, homodimer.

The catalysed reaction is Hydrolysis of Ala-|-Gly bond in repressor LexA.. Functionally, represses a number of genes involved in the response to DNA damage (SOS response), including recA and lexA. In the presence of single-stranded DNA, RecA interacts with LexA causing an autocatalytic cleavage which disrupts the DNA-binding part of LexA, leading to derepression of the SOS regulon and eventually DNA repair. The sequence is that of LexA repressor from Arthrobacter sp. (strain FB24).